Consider the following 238-residue polypeptide: DNA repair protein RecO (238 aa).

The protein belongs to the RecO family.

In terms of biological role, involved in DNA repair and RecF pathway recombination. The protein is DNA repair protein RecO of Hahella chejuensis (strain KCTC 2396).